A 145-amino-acid polypeptide reads, in one-letter code: Small t antigen (145 aa).

The 77-residue stretch at 6-82 folds into the J domain; the sequence is RLTELLCLPV…PEESGYATFE (77 aa). The disordered stretch occupies residues 58 to 80; that stretch reads EGLRADETLEDSDPEPEESGYAT. A compositionally biased stretch (acidic residues) spans 65-75; the sequence is TLEDSDPEPEE.

As to quaternary structure, interacts with host PPP2R1A; the interaction inhibits PP2A activity.

Its subcellular location is the host cytoplasm. It localises to the host nucleus. Its function is as follows. Promotes efficient viral genome replication by accelerating both G1 and S phase progression of the cell cycle. This is Small t antigen from Budgerigar fledgling disease virus (BFPyV).